The sequence spans 89 residues: Large ribosomal subunit protein bL27 (89 aa).

Positions 1–26 (MATKKAGGSSKNGRDSAGRRLGLKKS) are disordered.

This sequence belongs to the bacterial ribosomal protein bL27 family.

The protein is Large ribosomal subunit protein bL27 of Orientia tsutsugamushi (strain Ikeda) (Rickettsia tsutsugamushi).